The chain runs to 444 residues: N-succinylarginine dihydrolase (444 aa).

Substrate contacts are provided by residues 19 to 28, Asn110, and 137 to 138; these read AGLSFGNVAS and HR. Glu174 is a catalytic residue. Arg214 lines the substrate pocket. His250 is a catalytic residue. Substrate contacts are provided by Asp252 and Asn362. Catalysis depends on Cys368, which acts as the Nucleophile.

It belongs to the succinylarginine dihydrolase family. As to quaternary structure, homodimer.

It catalyses the reaction N(2)-succinyl-L-arginine + 2 H2O + 2 H(+) = N(2)-succinyl-L-ornithine + 2 NH4(+) + CO2. It participates in amino-acid degradation; L-arginine degradation via AST pathway; L-glutamate and succinate from L-arginine: step 2/5. Functionally, catalyzes the hydrolysis of N(2)-succinylarginine into N(2)-succinylornithine, ammonia and CO(2). The chain is N-succinylarginine dihydrolase from Shewanella amazonensis (strain ATCC BAA-1098 / SB2B).